The sequence spans 540 residues: Signal peptide peptidase-like 3 (540 aa).

The first 28 residues, 1-28 (MSSFDPPNHRYSALVLILLLLGFSVAAA), serve as a signal peptide directing secretion. The Lumenal segment spans residues 29–194 (DDVSWTEDSS…LYAPKRPAVD (166 aa)). The region spanning 98-172 (SHLSSRLDGH…ISKSSGDALN (75 aa)) is the PA domain. N-linked (GlcNAc...) asparagine glycans are attached at residues Asn155 and Asn172. Residues 195–215 (LTAGLLLLMAVGTVVVASLWS) traverse the membrane as a helical segment. Residues 216 to 250 (ELTDPDQANESYSILAKDVSSAGTRKDDPEKEILD) are Cytoplasmic-facing. A helical transmembrane segment spans residues 251 to 273 (ISVTGAVFFIVTASIFLLLLFYF). The Lumenal portion of the chain corresponds to 274–276 (MSS). A helical membrane pass occupies residues 277-299 (WFVWVLTIFFCIGGMQGMHNIIM). Over 300–321 (AVILRKCRHLARKSVKLPLLGT) the chain is Cytoplasmic. Residues 322–342 (MSVLSLLVNIVCLAFAVFWFI) form a helical membrane-spanning segment. Residues 343–347 (KRHTS) are Lumenal-facing. Residues 348 to 368 (YSWVGQDILGICLMITALQVV) traverse the membrane as a helical segment. The Cytoplasmic portion of the chain corresponds to 369–377 (RLPNIKVAT). Residues 378–398 (VLLCCAFVYDIFWVFISPLIF) traverse the membrane as a helical segment. Residue Asp387 is part of the active site. At 399–429 (HESVMIVVAQGDSSTGESIPMLLRIPRFFDP) the chain is on the lumenal side. Residues 430–450 (WGGYDMIGFGDILFPGLLISF) traverse the membrane as a helical segment. Asp440 is a catalytic residue. Topologically, residues 451-466 (ASRYDKIKKRVISNGY) are cytoplasmic. A helical transmembrane segment spans residues 467–487 (FLWLTIGYGIGLLLTYLGLYL). Topologically, residues 488–492 (MDGHG) are lumenal. A helical transmembrane segment spans residues 493–513 (QPALLYIVPCTLGLAVILGLV). Positions 494-496 (PAL) match the PAL motif. Topologically, residues 514–540 (RGELKELWNYGIEESESHTPEDPMPVA) are cytoplasmic.

This sequence belongs to the peptidase A22B family. Glycosylated. In terms of tissue distribution, ubiquitous.

Its subcellular location is the endosome membrane. Intramembrane-cleaving aspartic protease (I-CLiP) that cleaves type II membrane signal peptides in the hydrophobic plane of the membrane. This chain is Signal peptide peptidase-like 3 (SPPL3), found in Arabidopsis thaliana (Mouse-ear cress).